Here is a 426-residue protein sequence, read N- to C-terminus: Serine protease HTRA2, mitochondrial (426 aa).

The span at 31–58 (SSTCNSTNTDNGSHNTNYNSSNNNNNNN) shows a compositional bias: low complexity. The segment at 31–59 (SSTCNSTNTDNGSHNTNYNSSNNNNNNND) is disordered. A helical membrane pass occupies residues 71–87 (FLVPFSLGALASSVVAG). An IAP-binding motif is present at residues 79 to 82 (ALAS). The segment at 143-306 (SNGSGFVIEQ…IPIDYVKLFL (164 aa)) is serine protease. Residues His-161, Asp-193, and Ser-270 each act as charge relay system in the active site. A PDZ domain is found at 329 to 414 (MGITMLTLTP…DLDMVILRGV (86 aa)).

It belongs to the peptidase S1C family. Interacts with th/DIAP1 (via BIR 2 domain).

It localises to the mitochondrion intermembrane space. The protein resides in the mitochondrion membrane. The enzyme catalyses Cleavage of non-polar aliphatic amino-acids at the P1 position, with a preference for Val, Ile and Met. At the P2 and P3 positions, Arg is selected most strongly with a secondary preference for other hydrophilic residues.. Serine protease that shows proteolytic activity against a non-specific substrate beta-casein. Promotes or induces cell death either by direct binding to and inhibition of BIRC proteins (also called inhibitor of apoptosis proteins, IAPs), leading to an increase in caspase activity, or by a BIRC inhibition-independent, caspase-independent and serine protease activity-dependent mechanism. Can antagonize antiapoptotic activity of th/Diap1 by directly inducing the degradation of th/Diap1. This chain is Serine protease HTRA2, mitochondrial, found in Drosophila grimshawi (Hawaiian fruit fly).